The following is a 232-amino-acid chain: Putative ABC transporter ATP-binding protein VNG_2317G (232 aa).

The ABC transporter domain occupies 2-231 (LSVRNLVHRY…GALPDAGVRP (230 aa)). Residue 34–41 (GANGSGKT) participates in ATP binding.

Belongs to the ABC transporter superfamily.

It is found in the cell membrane. In terms of biological role, probably part of an ABC transporter complex. Responsible for energy coupling to the transport system. The chain is Putative ABC transporter ATP-binding protein VNG_2317G from Halobacterium salinarum (strain ATCC 700922 / JCM 11081 / NRC-1) (Halobacterium halobium).